Reading from the N-terminus, the 2195-residue chain is Integrator complex subunit 1 (2195 aa).

Residues 1–86 form a disordered region; that stretch reads MNRAKPTTVR…RPKLSSTPPL (86 aa). The residue at position 13 (Ser-13) is a Phosphoserine. Residues 34-45 show a composition bias toward polar residues; it reads GQASESKTTSTL. Lys-47 is subject to N6-acetyllysine. Low complexity predominate over residues 62–75; it reads SASLSGTSALTGLT. Thr-83 is modified (phosphothreonine). The residue at position 87 (Ser-87) is a Phosphoserine. A disordered region spans residues 267–297; that stretch reads LLQGEGARSGGELGAGSSPHPSLTEEEDSQT. Phosphoserine is present on residues Ser-307 and Ser-926. Positions 923 to 947 are disordered; it reads STASGEEDDEGESREQKAKKRQRQQ. The helical transmembrane segment at 1165–1185 threads the bilayer; it reads HILVVHAMVILLTLGPPRSGD. Positions 1313–1347 are disordered; the sequence is SLPPRRDSTEAPKPESSPEPPPGQGRTRAGTQVPV. Residues 1316-1325 show a composition bias toward basic and acidic residues; it reads PRRDSTEAPK. Ser-1320, Ser-1328, and Ser-1329 each carry phosphoserine.

The protein belongs to the Integrator subunit 1 family. In terms of assembly, component of the Integrator complex, composed of core subunits INTS1, INTS2, INTS3, INTS4, INTS5, INTS6, INTS7, INTS8, INTS9/RC74, INTS10, INTS11/CPSF3L, INTS12, INTS13, INTS14 and INTS15. The core complex associates with protein phosphatase 2A subunits PPP2CA and PPP2R1A, to form the Integrator-PP2A (INTAC) complex. Interacts with ESRRB, ESRRB is not a core component of the Integrator complex and this association is a bridge for the interaction with the multiprotein complex Integrator; attracts the transcriptional machinery.

The protein resides in the nucleus. The protein localises to the nucleus membrane. In terms of biological role, component of the integrator complex, a multiprotein complex that terminates RNA polymerase II (Pol II) transcription in the promoter-proximal region of genes. The integrator complex provides a quality checkpoint during transcription elongation by driving premature transcription termination of transcripts that are unfavorably configured for transcriptional elongation: the complex terminates transcription by (1) catalyzing dephosphorylation of the C-terminal domain (CTD) of Pol II subunit POLR2A/RPB1 and SUPT5H/SPT5, (2) degrading the exiting nascent RNA transcript via endonuclease activity and (3) promoting the release of Pol II from bound DNA. The integrator complex is also involved in terminating the synthesis of non-coding Pol II transcripts, such as enhancer RNAs (eRNAs), small nuclear RNAs (snRNAs), telomerase RNAs and long non-coding RNAs (lncRNAs). Within the integrator complex, INTS1 is involved in the post-termination step: INTS1 displaces INTS3 and the SOSS factors, allowing the integrator complex to return to the closed conformation, ready to bind to the paused elongation complex for another termination cycle. Mediates recruitment of cytoplasmic dynein to the nuclear envelope, probably as component of the integrator complex. In Mus musculus (Mouse), this protein is Integrator complex subunit 1.